The chain runs to 328 residues: 4-hydroxythreonine-4-phosphate dehydrogenase (328 aa).

His135 and Thr136 together coordinate substrate. Residues His165, His210, and His265 each coordinate a divalent metal cation. Substrate contacts are provided by Lys273, Asn282, and Arg291.

It belongs to the PdxA family. In terms of assembly, homodimer. Requires Zn(2+) as cofactor. The cofactor is Mg(2+). Co(2+) is required as a cofactor.

The protein localises to the cytoplasm. It carries out the reaction 4-(phosphooxy)-L-threonine + NAD(+) = 3-amino-2-oxopropyl phosphate + CO2 + NADH. It participates in cofactor biosynthesis; pyridoxine 5'-phosphate biosynthesis; pyridoxine 5'-phosphate from D-erythrose 4-phosphate: step 4/5. In terms of biological role, catalyzes the NAD(P)-dependent oxidation of 4-(phosphooxy)-L-threonine (HTP) into 2-amino-3-oxo-4-(phosphooxy)butyric acid which spontaneously decarboxylates to form 3-amino-2-oxopropyl phosphate (AHAP). This chain is 4-hydroxythreonine-4-phosphate dehydrogenase, found in Pseudomonas aeruginosa (strain ATCC 15692 / DSM 22644 / CIP 104116 / JCM 14847 / LMG 12228 / 1C / PRS 101 / PAO1).